Reading from the N-terminus, the 179-residue chain is Translation initiation factor IF-3 (179 aa).

Belongs to the IF-3 family. Monomer.

The protein resides in the cytoplasm. In terms of biological role, IF-3 binds to the 30S ribosomal subunit and shifts the equilibrium between 70S ribosomes and their 50S and 30S subunits in favor of the free subunits, thus enhancing the availability of 30S subunits on which protein synthesis initiation begins. The protein is Translation initiation factor IF-3 of Treponema pallidum (strain Nichols).